The following is a 153-amino-acid chain: Superoxide dismutase [Cu-Zn] (153 aa).

Positions 45, 47, and 62 each coordinate Cu cation. A disulfide bridge connects residues Cys-56 and Cys-145. 4 residues coordinate Zn(2+): His-62, His-70, His-79, and Asp-82. His-119 provides a ligand contact to Cu cation.

The protein belongs to the Cu-Zn superoxide dismutase family. In terms of assembly, homodimer. Cu cation is required as a cofactor. It depends on Zn(2+) as a cofactor.

Its subcellular location is the cytoplasm. The enzyme catalyses 2 superoxide + 2 H(+) = H2O2 + O2. Its function is as follows. Destroys radicals which are normally produced within the cells and which are toxic to biological systems. The sequence is that of Superoxide dismutase [Cu-Zn] (SOD) from Schistosoma mansoni (Blood fluke).